The primary structure comprises 428 residues: Enolase (428 aa).

Glutamine 163 is a (2R)-2-phosphoglycerate binding site. Glutamate 205 serves as the catalytic Proton donor. The Mg(2+) site is built by aspartate 242, glutamate 285, and aspartate 312. The (2R)-2-phosphoglycerate site is built by lysine 337, arginine 366, serine 367, and lysine 388. The Proton acceptor role is filled by lysine 337.

Belongs to the enolase family. Component of the RNA degradosome, a multiprotein complex involved in RNA processing and mRNA degradation. Mg(2+) is required as a cofactor.

Its subcellular location is the cytoplasm. The protein localises to the secreted. It is found in the cell surface. It carries out the reaction (2R)-2-phosphoglycerate = phosphoenolpyruvate + H2O. Its pathway is carbohydrate degradation; glycolysis; pyruvate from D-glyceraldehyde 3-phosphate: step 4/5. Functionally, catalyzes the reversible conversion of 2-phosphoglycerate (2-PG) into phosphoenolpyruvate (PEP). It is essential for the degradation of carbohydrates via glycolysis. The sequence is that of Enolase from Halorhodospira halophila (strain DSM 244 / SL1) (Ectothiorhodospira halophila (strain DSM 244 / SL1)).